The sequence spans 104 residues: Cell division protein FtsB (104 aa).

Residues methionine 1–lysine 3 lie on the Cytoplasmic side of the membrane. A helical transmembrane segment spans residues leucine 4–leucine 21. The Periplasmic segment spans residues glycine 22–glutamine 104. Positions aspartate 33 to glycine 62 form a coiled coil.

This sequence belongs to the FtsB family. As to quaternary structure, part of a complex composed of FtsB, FtsL and FtsQ.

It is found in the cell inner membrane. Essential cell division protein. May link together the upstream cell division proteins, which are predominantly cytoplasmic, with the downstream cell division proteins, which are predominantly periplasmic. The protein is Cell division protein FtsB of Erwinia tasmaniensis (strain DSM 17950 / CFBP 7177 / CIP 109463 / NCPPB 4357 / Et1/99).